A 1515-amino-acid polypeptide reads, in one-letter code: Glutamate synthase [NADPH] large chain (1515 aa).

Residues 1–36 constitute a propeptide that is removed on maturation; sequence MTTELNQGEQFVADFRANAAALTTANAYNPEDEHDA. The active-site For GATase activity is cysteine 37. The Glutamine amidotransferase type-2 domain occupies 37–432; sequence CGVGFIAAID…PGEMIAVDLQ (396 aa). Residues 916–937 form a disordered region; sequence AKSDSGEGGEDPARFRPDKNGD. Basic and acidic residues predominate over residues 926–936; the sequence is DPARFRPDKNG. FMN is bound by residues 1085-1142 and 1086-1142; these read LSEV…IMVR and SEVH…IMVR. Residues cysteine 1138, cysteine 1144, and cysteine 1149 each contribute to the [3Fe-4S] cluster site.

This sequence belongs to the glutamate synthase family. As to quaternary structure, aggregate of 4 catalytic active heterodimers, consisting of a large and a small subunit. It depends on [3Fe-4S] cluster as a cofactor. FAD is required as a cofactor. FMN serves as cofactor.

It carries out the reaction 2 L-glutamate + NADP(+) = L-glutamine + 2-oxoglutarate + NADPH + H(+). It functions in the pathway amino-acid biosynthesis; L-glutamate biosynthesis via GLT pathway; L-glutamate from 2-oxoglutarate and L-glutamine (NADP(+) route): step 1/1. It participates in energy metabolism; nitrogen metabolism. This Azospirillum brasilense protein is Glutamate synthase [NADPH] large chain (gltB).